The chain runs to 397 residues: Elongation factor Tu-1 (397 aa).

The tr-type G domain occupies 10 to 206; it reads KPHVNIGTIG…AVDENIPEPE (197 aa). Positions 19-26 are G1; it reads GHIDHGKT. Residue 19 to 26 coordinates GTP; that stretch reads GHIDHGKT. Thr26 contacts Mg(2+). The G2 stretch occupies residues 62–66; sequence GITIS. A G3 region spans residues 83 to 86; that stretch reads DCPG. GTP contacts are provided by residues 83-87 and 138-141; these read DCPGH and NKAD. Positions 138–141 are G4; it reads NKAD. The segment at 176-178 is G5; it reads SAL. Thr386 carries the post-translational modification Phosphothreonine.

The protein belongs to the TRAFAC class translation factor GTPase superfamily. Classic translation factor GTPase family. EF-Tu/EF-1A subfamily. In terms of assembly, monomer. Post-translationally, phosphorylated on threonine and serine.

It localises to the cytoplasm. It carries out the reaction GTP + H2O = GDP + phosphate + H(+). GTP hydrolase that promotes the GTP-dependent binding of aminoacyl-tRNA to the A-site of ribosomes during protein biosynthesis. The sequence is that of Elongation factor Tu-1 from Streptomyces collinus.